The chain runs to 277 residues: 4-hydroxy-tetrahydrodipicolinate reductase (277 aa).

NAD(+) is bound by residues 11–16 (GALGRM) and 110–112 (GTT). The Proton donor/acceptor role is filled by His-166. His-167 is a (S)-2,3,4,5-tetrahydrodipicolinate binding site. The Proton donor role is filled by Lys-170. Position 176 to 177 (176 to 177 (GT)) interacts with (S)-2,3,4,5-tetrahydrodipicolinate.

Belongs to the DapB family.

The protein localises to the cytoplasm. It carries out the reaction (S)-2,3,4,5-tetrahydrodipicolinate + NAD(+) + H2O = (2S,4S)-4-hydroxy-2,3,4,5-tetrahydrodipicolinate + NADH + H(+). It catalyses the reaction (S)-2,3,4,5-tetrahydrodipicolinate + NADP(+) + H2O = (2S,4S)-4-hydroxy-2,3,4,5-tetrahydrodipicolinate + NADPH + H(+). The protein operates within amino-acid biosynthesis; L-lysine biosynthesis via DAP pathway; (S)-tetrahydrodipicolinate from L-aspartate: step 4/4. Functionally, catalyzes the conversion of 4-hydroxy-tetrahydrodipicolinate (HTPA) to tetrahydrodipicolinate. The sequence is that of 4-hydroxy-tetrahydrodipicolinate reductase from Synechococcus sp. (strain CC9902).